We begin with the raw amino-acid sequence, 85 residues long: Large ribosomal subunit protein bL27 (85 aa).

The interval 1 to 20 (MAHKKAGGSTRNGRDSEAKR) is disordered.

Belongs to the bacterial ribosomal protein bL27 family.

The chain is Large ribosomal subunit protein bL27 from Enterobacter sp. (strain 638).